Here is a 449-residue protein sequence, read N- to C-terminus: Trigger factor (449 aa).

The PPIase FKBP-type domain maps to 173–258; the sequence is GDRVTVDFVG…MKKVEWPHLP (86 aa).

It belongs to the FKBP-type PPIase family. Tig subfamily.

It localises to the cytoplasm. It carries out the reaction [protein]-peptidylproline (omega=180) = [protein]-peptidylproline (omega=0). Functionally, involved in protein export. Acts as a chaperone by maintaining the newly synthesized protein in an open conformation. Functions as a peptidyl-prolyl cis-trans isomerase. This chain is Trigger factor, found in Burkholderia thailandensis (strain ATCC 700388 / DSM 13276 / CCUG 48851 / CIP 106301 / E264).